Reading from the N-terminus, the 527-residue chain is T-complex protein 1 subunit delta (527 aa).

The protein belongs to the TCP-1 chaperonin family. In terms of assembly, heterooligomeric complex of about 850 to 900 kDa that forms two stacked rings, 12 to 16 nm in diameter.

It is found in the cytoplasm. Functionally, molecular chaperone; assists the folding of proteins upon ATP hydrolysis. Known to play a role, in vitro, in the folding of actin and tubulin. The polypeptide is T-complex protein 1 subunit delta (cct4) (Schizosaccharomyces pombe (strain 972 / ATCC 24843) (Fission yeast)).